Here is a 763-residue protein sequence, read N- to C-terminus: 1,4-alpha-glucan branching enzyme GlgB (763 aa).

Asp-437 (nucleophile) is an active-site residue. Catalysis depends on Glu-488, which acts as the Proton donor.

The protein belongs to the glycosyl hydrolase 13 family. GlgB subfamily. In terms of assembly, monomer.

It catalyses the reaction Transfers a segment of a (1-&gt;4)-alpha-D-glucan chain to a primary hydroxy group in a similar glucan chain.. It participates in glycan biosynthesis; glycogen biosynthesis. Functionally, catalyzes the formation of the alpha-1,6-glucosidic linkages in glycogen by scission of a 1,4-alpha-linked oligosaccharide from growing alpha-1,4-glucan chains and the subsequent attachment of the oligosaccharide to the alpha-1,6 position. This is 1,4-alpha-glucan branching enzyme GlgB from Synechococcus sp. (strain JA-2-3B'a(2-13)) (Cyanobacteria bacterium Yellowstone B-Prime).